The chain runs to 68 residues: Protein SlyX homolog (68 aa).

Belongs to the SlyX family.

This Ectopseudomonas mendocina (strain ymp) (Pseudomonas mendocina) protein is Protein SlyX homolog.